A 317-amino-acid polypeptide reads, in one-letter code: Ribosomal protein L11 methyltransferase (317 aa).

S-adenosyl-L-methionine-binding residues include T158, G179, D201, and N244.

Belongs to the methyltransferase superfamily. PrmA family.

The protein localises to the cytoplasm. It catalyses the reaction L-lysyl-[protein] + 3 S-adenosyl-L-methionine = N(6),N(6),N(6)-trimethyl-L-lysyl-[protein] + 3 S-adenosyl-L-homocysteine + 3 H(+). Its function is as follows. Methylates ribosomal protein L11. This chain is Ribosomal protein L11 methyltransferase, found in Streptococcus pyogenes serotype M28 (strain MGAS6180).